Consider the following 165-residue polypeptide: uncharacterized protein (165 aa).

Positions 51 to 102 (KQAAVEPGARGGERPTGSQAGVTDTPDSAPFQRRSRAPRAREQAAQAGLNQK) are disordered. The segment covering 66–76 (TGSQAGVTDTP) has biased composition (polar residues).

This is an uncharacterized protein from Mus musculus (Mouse).